Reading from the N-terminus, the 786-residue chain is Endonuclease MutS2 (786 aa).

Residue 332–339 (GPNTGGKT) coordinates ATP. In terms of domain architecture, Smr spans 711-786 (IDLRGMDSEE…GTGVTVVILK (76 aa)).

The protein belongs to the DNA mismatch repair MutS family. MutS2 subfamily. In terms of assembly, homodimer. Binds to stalled ribosomes, contacting rRNA.

In terms of biological role, endonuclease that is involved in the suppression of homologous recombination and thus may have a key role in the control of bacterial genetic diversity. Acts as a ribosome collision sensor, splitting the ribosome into its 2 subunits. Detects stalled/collided 70S ribosomes which it binds and splits by an ATP-hydrolysis driven conformational change. Acts upstream of the ribosome quality control system (RQC), a ribosome-associated complex that mediates the extraction of incompletely synthesized nascent chains from stalled ribosomes and their subsequent degradation. Probably generates substrates for RQC. The sequence is that of Endonuclease MutS2 from Clostridium perfringens (strain ATCC 13124 / DSM 756 / JCM 1290 / NCIMB 6125 / NCTC 8237 / Type A).